The sequence spans 33 residues: GFLDSFKNAMIGVAKSAGKTALNTLACKIDKTC.

An intrachain disulfide couples cysteine 27 to cysteine 33.

As to expression, expressed by the skin glands.

Its subcellular location is the secreted. Has antibacterial activity against the Gram-positive bacterium S.aureus ATCC 25923 and the Gram-negative bacterium E.coli ATCC 25726. This chain is Brevinin-2PTd, found in Pulchrana picturata (Malaysian fire frog).